Here is an 818-residue protein sequence, read N- to C-terminus: FAD-dependent monooxygenase anuJ (818 aa).

Glu46, Ala60, Arg122, Asp329, and Gly342 together coordinate FAD. 3 consecutive transmembrane segments (helical) span residues 471 to 491 (VLWA…MFSV), 539 to 559 (FFYQ…IMLV), and 571 to 591 (LSFA…FVPI). The N-linked (GlcNAc...) asparagine glycan is linked to Asn614. The next 2 membrane-spanning stretches (helical) occupy residues 621 to 641 (ILPV…LSPV) and 647 to 667 (AAGF…AGLA). N-linked (GlcNAc...) asparagine glycosylation is present at Asn683. The next 2 membrane-spanning stretches (helical) occupy residues 743–763 (WDQV…FADL) and 778–798 (FSAL…LMWL).

The protein belongs to the paxM FAD-dependent monooxygenase family.

It is found in the membrane. In terms of biological role, highly reducing polyketide synthase; part of the gene cluster that mediates the biosynthesis of annullatin D, an alkylated aromatic polyketide with a fused dihydrobenzofuran lactone ring system that exhibits potent agonistic activities toward the cannabinoid receptors. AnuJ does not seem to play a role within the pathway. The annullatin backbone 2-hydroxymethyl-3-pentylphenol is assembled from one acetyl-CoA starter unit and 5 malonyl-CoA elongation units by cooperation of the highly reducing polyketide synthase anuA, the short-chain dehydrogenase anuB and the oxidoreductase anuC, before being hydroxylated at the C-5 alkyl chain by the cytochrome P450 monooxygenase anuE to form (8S)-annullatin E. The prenyltransferase anuH subsequently installs one isoprenyl group at the benzene ring to form (8S)-annullatin J. Enzymatic or nonenzymatic dihydro-benzofuran ring formation between the prenyl and the phenolic hydroxyl groups in (8S)-annullatin J results in two diastereomers (2S,9S)-annullatin H and compound 12. The intermediate (2S,9S)-annullatin H is then converted to (2S,9S)-annullatin D by the FAD-linked oxidoreductase anuG-catalyzed five-member lactone ring formation. The isomer 12 acts as a substrate for the short-chain dehydrogenase anuF and is oxidized to (2R)-annullatin F, which is subsequently acetylated by an acetyltransferase leading to (2R)-annullatin G formation. The remaining enzymes identified within the cluster, anuD, anuI and anuJ, seem not to be involved in annullatin biosynthesis. This is FAD-dependent monooxygenase anuJ from Penicillium roqueforti (strain FM164).